The sequence spans 267 residues: Putative B3 domain-containing protein LOC_Os07g12820 (267 aa).

Positions 4-99 (PTFSMVKIKT…RLNVIIFNKE (96 aa)) form a DNA-binding region, TF-B3.

The protein localises to the nucleus. In Oryza sativa subsp. japonica (Rice), this protein is Putative B3 domain-containing protein LOC_Os07g12820.